Here is a 260-residue protein sequence, read N- to C-terminus: Adenosylcobinamide-GDP ribazoletransferase (260 aa).

Transmembrane regions (helical) follow at residues 40–60 (AFPFAGLLIGFVPAVTLLLLL), 64–84 (TDPLVAALVALSVQALVTGAL), 117–137 (YGAIALILSFAIRAAALAAII), 142–162 (PLAAALAIPAVAALSRGAIAW), 188–208 (HFALVSAGLLAALLIWPPFGL), and 210–230 (PLVAGLLVAGVAGFAFTVFIR).

It belongs to the CobS family. Mg(2+) serves as cofactor.

The protein resides in the cell inner membrane. It catalyses the reaction alpha-ribazole + adenosylcob(III)inamide-GDP = adenosylcob(III)alamin + GMP + H(+). The catalysed reaction is alpha-ribazole 5'-phosphate + adenosylcob(III)inamide-GDP = adenosylcob(III)alamin 5'-phosphate + GMP + H(+). The protein operates within cofactor biosynthesis; adenosylcobalamin biosynthesis; adenosylcobalamin from cob(II)yrinate a,c-diamide: step 7/7. In terms of biological role, joins adenosylcobinamide-GDP and alpha-ribazole to generate adenosylcobalamin (Ado-cobalamin). Also synthesizes adenosylcobalamin 5'-phosphate from adenosylcobinamide-GDP and alpha-ribazole 5'-phosphate. The polypeptide is Adenosylcobinamide-GDP ribazoletransferase (Rhizobium etli (strain ATCC 51251 / DSM 11541 / JCM 21823 / NBRC 15573 / CFN 42)).